The following is a 94-amino-acid chain: Large ribosomal subunit protein uL23 (94 aa).

This sequence belongs to the universal ribosomal protein uL23 family. Part of the 50S ribosomal subunit. Contacts protein L29, and trigger factor when it is bound to the ribosome.

Functionally, one of the early assembly proteins it binds 23S rRNA. One of the proteins that surrounds the polypeptide exit tunnel on the outside of the ribosome. Forms the main docking site for trigger factor binding to the ribosome. The sequence is that of Large ribosomal subunit protein uL23 from Geobacter sp. (strain M21).